The sequence spans 543 residues: uncharacterized protein (543 aa).

A TRAM domain is found at Met1–Lys59. Positions 283, 312, 333, and 381 each coordinate S-adenosyl-L-methionine. Cys408 functions as the Nucleophile in the catalytic mechanism.

Belongs to the class I-like SAM-binding methyltransferase superfamily. RNA M5U methyltransferase family.

This is an uncharacterized protein from Streptococcus pneumoniae serotype 4 (strain ATCC BAA-334 / TIGR4).